Here is a 90-residue protein sequence, read N- to C-terminus: uncharacterized protein (90 aa).

The next 2 helical transmembrane spans lie at Ile17–Val37 and Ile55–Ala75.

Its subcellular location is the membrane. This is an uncharacterized protein from Schizosaccharomyces pombe (strain 972 / ATCC 24843) (Fission yeast).